The sequence spans 383 residues: S-adenosylmethionine synthase (383 aa).

An ATP-binding site is contributed by H15. Mg(2+) is bound at residue D17. E43 serves as a coordination point for K(+). Residues E56 and Q99 each coordinate L-methionine. Positions 99–109 are flexible loop; the sequence is QSPDINQGVDR. ATP-binding positions include 164 to 166, 230 to 231, D239, 245 to 246, A262, and K266; these read DAK, RF, and RK. D239 is an L-methionine binding site. K270 contributes to the L-methionine binding site.

Belongs to the AdoMet synthase family. Homotetramer; dimer of dimers. It depends on Mg(2+) as a cofactor. Requires K(+) as cofactor.

The protein localises to the cytoplasm. The enzyme catalyses L-methionine + ATP + H2O = S-adenosyl-L-methionine + phosphate + diphosphate. Its pathway is amino-acid biosynthesis; S-adenosyl-L-methionine biosynthesis; S-adenosyl-L-methionine from L-methionine: step 1/1. Catalyzes the formation of S-adenosylmethionine (AdoMet) from methionine and ATP. The overall synthetic reaction is composed of two sequential steps, AdoMet formation and the subsequent tripolyphosphate hydrolysis which occurs prior to release of AdoMet from the enzyme. The protein is S-adenosylmethionine synthase of Shewanella sp. (strain W3-18-1).